The chain runs to 367 residues: MGLSAPKNKIKLSHDPNNTKWSGNTDSFGHRMMKSQGWTPGEYLGAKDAAHAEFHTAANASHIRVVIKDNNLGLGAKIGSGVGHGECTGLDVFQNLLGRLNGKEEAEIEKEQKGREDLKRAIYAERKWGSIRFVRGGVLVGDKIQDLIDGEKERVKALKKGKTAESSSDDSDSSSDEEEEEKSPEPVTEKKKSSKRKREEQEEEEKTSSKKSKKDKKSKKRKSEDEDDKDKSESKKSKKSKKDRKSKSKSTSESETETLDEAAIKARKKEKKEKKRREKEAATAGADTEETSSTSKSSKKNSKKDKHKSSSASESSTKESTPTVTESSGRSTPMGIRSIRARHIAQKRMASMDVASLNQIFMIKSQT.

2 disordered regions span residues Met-1–Phe-28 and Lys-156–Ile-336. Over residues Asp-15–Ser-27 the composition is skewed to polar residues. The G-patch domain occupies Thr-25–Gly-79. Positions Ser-167–Lys-182 are enriched in acidic residues. Composition is skewed to basic residues over residues Ser-209 to Arg-221, Lys-236 to Ser-248, and Lys-265 to Arg-277. Residues Ala-282–Lys-296 are compositionally biased toward low complexity. Positions Ser-297–Ser-309 are enriched in basic residues. Positions Ser-310–Ser-328 are enriched in low complexity.

It belongs to the PINX1 family.

It localises to the nucleus. The protein resides in the nucleolus. Functionally, involved in rRNA-processing at A0, A1 and A2 sites and negatively regulates telomerase. The sequence is that of Protein pxr1 (pxr1) from Sclerotinia sclerotiorum (strain ATCC 18683 / 1980 / Ss-1) (White mold).